A 126-amino-acid polypeptide reads, in one-letter code: Ribosome-binding factor A (126 aa).

The protein belongs to the RbfA family. In terms of assembly, monomer. Binds 30S ribosomal subunits, but not 50S ribosomal subunits or 70S ribosomes.

It localises to the cytoplasm. Its function is as follows. One of several proteins that assist in the late maturation steps of the functional core of the 30S ribosomal subunit. Associates with free 30S ribosomal subunits (but not with 30S subunits that are part of 70S ribosomes or polysomes). Required for efficient processing of 16S rRNA. May interact with the 5'-terminal helix region of 16S rRNA. In Thermosipho africanus (strain TCF52B), this protein is Ribosome-binding factor A.